We begin with the raw amino-acid sequence, 178 residues long: MNPLLQDYARILLEWNQTHNLSGAKHLSELEPQITDALKPLEFIKDFKSCLDIGSGAGLPAIPLALEKPEVKFILLEPRMKRAAFLNYLKSVLPLKNIEIVKKRLEEYQNPLQVDLITSRAVANSSFLIEKSQRFLNDKGYFLFYKGEQLKDEIAYKDTECFICKKRIYFYKPKESLC.

Residues glycine 54, leucine 59, leucine 105–glutamate 106, and arginine 120 contribute to the S-adenosyl-L-methionine site.

Belongs to the methyltransferase superfamily. RNA methyltransferase RsmG family.

The protein resides in the cytoplasm. The catalysed reaction is guanosine(527) in 16S rRNA + S-adenosyl-L-methionine = N(7)-methylguanosine(527) in 16S rRNA + S-adenosyl-L-homocysteine. Its function is as follows. Specifically methylates the N7 position of guanine in position 527 of 16S rRNA. The sequence is that of Ribosomal RNA small subunit methyltransferase G from Helicobacter acinonychis (strain Sheeba).